Reading from the N-terminus, the 622-residue chain is Sodium-coupled monocarboxylate transporter 1 (622 aa).

Topologically, residues 1–15 (MVTPGNIGSFTVWDY) are extracellular. The helical transmembrane segment at 16–36 (LVFALMLLISAVIGIYYAFAG) threads the bilayer. The Cytoplasmic portion of the chain corresponds to 37 to 51 (GGQKTSKDFLMGGRS). The chain crosses the membrane as a helical span at residues 52 to 72 (MTAVPVALSLTASFMSAVTVL). Over 73–83 (GTPAEVYRFGA) the chain is Extracellular. A helical transmembrane segment spans residues 84 to 104 (MFIIFAFSYTIVVIISSEVFL). Residues 105 to 128 (PVFYRLGITSTYEYLELRFNKFVR) are Cytoplasmic-facing. A helical membrane pass occupies residues 129–149 (LLGTILFIIQTVLYTGIVIYA). The Extracellular segment spans residues 150–161 (PALALNQVTGFD). A helical membrane pass occupies residues 162–182 (LWGAVVATGVVCTFYCTMGGL). Over 183–184 (KA) the chain is Cytoplasmic. The helical transmembrane segment at 185–205 (VVWTDVFQVGIMVAGFTSVII) threads the bilayer. Residues 206–241 (RAVVVQGGIGPILNDSYYGDRLNFWDFDPNPLKRHT) lie on the Extracellular side of the membrane. Asn-219 carries N-linked (GlcNAc...) asparagine glycosylation. A helical membrane pass occupies residues 242–262 (FWTIVVGGTFTWTGIYGVNQA). Residues 263–283 (QVQRYIACKTRFQAKMSLYVN) lie on the Cytoplasmic side of the membrane. Residues 284–304 (LIGLWAILACAVLSGLAMYSI) form a helical membrane-spanning segment. Residues 305-336 (YKDCDPWTAKFVSAPDQLMPYLALDILRDYPG) lie on the Extracellular side of the membrane. A helical transmembrane segment spans residues 337 to 357 (LPGLFVSCAYSGTLSTVSSSI). The Cytoplasmic segment spans residues 358-389 (NALAAVTVEDLIKPYIRSLSEKKMSWISKGTS). Residues 390–410 (LLYGAICIGMAGIASLMGGLL) form a helical membrane-spanning segment. The Extracellular portion of the chain corresponds to 411-415 (QAALS). The chain crosses the membrane as a helical span at residues 416–436 (IFGMVGGPLLGLFSLGILFPF). Residues 437-438 (VN) are Cytoplasmic-facing. The helical transmembrane segment at 439–459 (SLGAVIGLLSGFAISLWVGIG) threads the bilayer. Residues 460–521 (SQIYAPSPSS…LADSWYSLSY (62 aa)) lie on the Extracellular side of the membrane. 2 N-linked (GlcNAc...) asparagine glycosylation sites follow: Asn-481 and Asn-488. A helical transmembrane segment spans residues 522 to 542 (LYFSTIGTIVAVLVGVIVSLL). The Cytoplasmic segment spans residues 543 to 622 (SGGLKQNVNR…KGEKTNGITA (80 aa)). The disordered stretch occupies residues 591–622 (DNDMEQGTDNPAFNNMEMTSTEKGEKTNGITA). Residues 595–609 (EQGTDNPAFNNMEMT) are compositionally biased toward polar residues.

This sequence belongs to the sodium:solute symporter (SSF) (TC 2.A.21) family. As to expression, in the gastrula and neurula stages, expressed in the gastrula anterior endoderm and in the entire circumference of the blastopore lip superficial endoderm. At tailbud stages, abundant expression observed in the ventral midgut region. As development proceeds expression becomes restricted to the liver diverticulum and ultimately to the presumptive gallbladder, by tadpole stage 35. Also present in pronephros and the tip of the tail.

The protein localises to the apical cell membrane. It catalyses the reaction (S)-lactate(out) + 2 Na(+)(out) = (S)-lactate(in) + 2 Na(+)(in). The catalysed reaction is propanoate(out) + 2 Na(+)(out) = propanoate(in) + 2 Na(+)(in). The enzyme catalyses pyruvate(out) + 2 Na(+)(out) = pyruvate(in) + 2 Na(+)(in). It carries out the reaction acetate(out) + 2 Na(+)(out) = acetate(in) + 2 Na(+)(in). It catalyses the reaction butanoate(out) + 2 Na(+)(out) = butanoate(in) + 2 Na(+)(in). The catalysed reaction is nicotinate(out) + 2 Na(+)(out) = nicotinate(in) + 2 Na(+)(in). The enzyme catalyses (R)-3-hydroxybutanoate(out) + 2 Na(+)(out) = (R)-3-hydroxybutanoate(in) + 2 Na(+)(in). It carries out the reaction acetoacetate(out) + 2 Na(+)(out) = acetoacetate(in) + 2 Na(+)(in). It catalyses the reaction 4-methyl-2-oxopentanoate(out) + 2 Na(+)(out) = 4-methyl-2-oxopentanoate(in) + 2 Na(+)(in). The catalysed reaction is 5-oxo-L-proline(out) + 2 Na(+)(out) = 5-oxo-L-proline(in) + 2 Na(+)(in). The enzyme catalyses iodide(out) = iodide(in). It carries out the reaction chloride(in) = chloride(out). It catalyses the reaction nitrate(in) = nitrate(out). The catalysed reaction is bromide(in) = bromide(out). In terms of biological role, acts as an electrogenic sodium (Na(+)) and chloride (Cl-)-dependent sodium-coupled solute transporter, including transport of monocarboxylates (short-chain fatty acids including L-lactate, D-lactate, pyruvate, acetate, propionate, valerate and butyrate), mocarboxylate drugs (nicotinate, benzoate, salicylate and 5-aminosalicylate) and ketone bodies (beta-D-hydroxybutyrate, acetoacetate and alpha-ketoisocaproate), with a Na(+):substrate stoichiometry of between 4:1 and 2:1. Catalyzes passive carrier mediated diffusion of iodide. Mediates iodide transport from the thyrocyte into the colloid lumen through the apical membrane. Mediates sodium-coupled electrogenic transport of pyroglutamate (5-oxo-L-proline). Can mediate the transport of chloride, bromide, iodide and nitrate ions when external concentration of sodium ions is reduced. The protein is Sodium-coupled monocarboxylate transporter 1 of Xenopus laevis (African clawed frog).